The sequence spans 681 residues: Endopolyphosphatase (681 aa).

Residues Met-1–Arg-23 lie on the Cytoplasmic side of the membrane. The helical; Signal-anchor for type II membrane protein transmembrane segment at Ile-24–Thr-44 threads the bilayer. The Vacuolar portion of the chain corresponds to Ser-45–Asp-681. 4 N-linked (GlcNAc...) asparagine glycosylation sites follow: Asn-127, Asn-173, Asn-309, and Asn-487. Residues Lys-549–Asn-562 show a composition bias toward basic residues. The tract at residues Lys-549–Pro-585 is disordered.

This sequence belongs to the endopolyphosphatase PPN1 family. A divalent metal cation serves as cofactor. Post-translationally, processing by proteases in the vacuole may be required for activation.

The protein resides in the vacuole membrane. It carries out the reaction [phosphate](n+1) + n H2O = (n+1) phosphate + n H(+). Its function is as follows. Catalyzes the hydrolysis of inorganic polyphosphate (polyP) chains of many hundreds of phosphate residues into shorter lengths. The polypeptide is Endopolyphosphatase (PPN1) (Kluyveromyces lactis (strain ATCC 8585 / CBS 2359 / DSM 70799 / NBRC 1267 / NRRL Y-1140 / WM37) (Yeast)).